The chain runs to 361 residues: MTSSYRQQLQAKIDRITTQFSEFTPPTLEVFESPEQHFRMRAEFRIWHTENDMFYAMFERNGDGKQKTVVRIDEFPIADKSINDLMPLLLAELKANSLLSQRLFEVDFLATLSGEMLVTLIYHRKLNQEWEQAAKALAEKLNIKIMGRSRGQKIVIGDDFVVEEFELLNRSFKYKQIESSFTQPNAQVCKKMLQWACDAAEGSKKHLLELYCGNGNFTLPLSLKFERVLATELAKSSVYAAQWNIEQNQIDNIQVARLSAEEFTQAYQGEREFRRLQEADIDIQSYDFGTVFVDPPRAGIDDETLKLLQGFERIIYISCNPDTLYENLKTLTQTHRVTKFALFDQFPYTHHVESGVLLEKI.

S-adenosyl-L-methionine is bound by residues Q183, Y211, N216, E232, and D294. C319 functions as the Nucleophile in the catalytic mechanism. E353 serves as the catalytic Proton acceptor.

This sequence belongs to the class I-like SAM-binding methyltransferase superfamily. RNA M5U methyltransferase family. TrmA subfamily.

The catalysed reaction is uridine(54) in tRNA + S-adenosyl-L-methionine = 5-methyluridine(54) in tRNA + S-adenosyl-L-homocysteine + H(+). It carries out the reaction uridine(341) in tmRNA + S-adenosyl-L-methionine = 5-methyluridine(341) in tmRNA + S-adenosyl-L-homocysteine + H(+). Its function is as follows. Dual-specificity methyltransferase that catalyzes the formation of 5-methyluridine at position 54 (m5U54) in all tRNAs, and that of position 341 (m5U341) in tmRNA (transfer-mRNA). The sequence is that of tRNA/tmRNA (uracil-C(5))-methyltransferase from Acinetobacter baumannii (strain AYE).